The following is a 244-amino-acid chain: Isoprenyl transferase (244 aa).

Asp-23 is an active-site residue. Asp-23 is a binding site for Mg(2+). Substrate-binding positions include 24–27, Trp-28, Arg-36, His-40, and 68–70; these read GNGR and STE. The active-site Proton acceptor is the Asn-71. Substrate contacts are provided by residues Trp-72, Arg-74, Arg-191, and 197-199; that span reads RMS. Mg(2+) is bound at residue Glu-210.

Belongs to the UPP synthase family. In terms of assembly, homodimer. Requires Mg(2+) as cofactor.

Catalyzes the condensation of isopentenyl diphosphate (IPP) with allylic pyrophosphates generating different type of terpenoids. This is Isoprenyl transferase from Lactococcus lactis subsp. lactis (strain IL1403) (Streptococcus lactis).